The following is a 65-amino-acid chain: Precursor peptide TigB (65 aa).

6 TIGSVS motif repeats span residues 16 to 21 (TIGSVS), 23 to 28 (TIGSVS), 33 to 38 (TIGSVS), 40 to 45 (TIGSVS), 47 to 52 (TIGSVS), and 54 to 59 (TIGSVS). Residues Ile17, Ile24, Ile34, Ile41, Ile48, and Ile55 each carry the methylcyclopropylglycine modification.

Post-translationally, is subject to maturation by TigE, that catalyzes the formation of methylcyclopropylglycine (mCPG) residues from isoleucine residues residing in the repeating TIGSVS motifs.

Its function is as follows. Precursor peptide which undergoes post-translational modifications by tailoring enzymes, leading to the mature natural product. The polypeptide is Precursor peptide TigB (Paramaledivibacter caminithermalis (strain DSM 15212 / CIP 107654 / DViRD3) (Clostridium caminithermale)).